Here is a 130-residue protein sequence, read N- to C-terminus: MNIIEQIEKEEIARLTANKTIPAFAPGDTVIVNVNVVEGNRKRVQAYEGVVIAKRNRGLNSSFIVRKISSGEGVERTFQLYSPLIAGIEVKRRGDVRRAKLYYLRERSGKSARIKEKLVMKAKPAAVAAE.

It belongs to the bacterial ribosomal protein bL19 family.

Functionally, this protein is located at the 30S-50S ribosomal subunit interface and may play a role in the structure and function of the aminoacyl-tRNA binding site. The polypeptide is Large ribosomal subunit protein bL19 (Cupriavidus metallidurans (strain ATCC 43123 / DSM 2839 / NBRC 102507 / CH34) (Ralstonia metallidurans)).